Reading from the N-terminus, the 215-residue chain is Sodium channel regulatory subunit beta-2 (215 aa).

Residues 1–29 (MHRDAWLPRPAFSLTGLSLFFSLVPPGRS) form the signal peptide. Residues 30 to 157 (MEVTAPTTLS…LEVPPERDST (128 aa)) are Extracellular-facing. Positions 32-154 (VTAPTTLSVL…QVLLEVPPER (123 aa)) constitute an Ig-like C2-type domain. Residues N42, N66, and N74 are each glycosylated (N-linked (GlcNAc...) asparagine). Disulfide bonds link C50-C127 and C72-C75. The helical transmembrane segment at 158–179 (VAVIVGASVGGFLAVVILVLMV) threads the bilayer. Topologically, residues 180-215 (VKCVRRKKEQKLSTDDLKTEEEGKMDGEGNAEDGTK) are cytoplasmic. The disordered stretch occupies residues 188-215 (EQKLSTDDLKTEEEGKMDGEGNAEDGTK). The span at 189–215 (QKLSTDDLKTEEEGKMDGEGNAEDGTK) shows a compositional bias: basic and acidic residues. Position 192 is a phosphoserine (S192).

This sequence belongs to the sodium channel auxiliary subunit SCN2B (TC 8.A.17) family. A voltage-gated sodium (Nav) channel consists of an ion-conducting pore-forming alpha subunit functional on its own that is regulated by one or more beta subunits. The beta subunit SCN2B is disulfide-linked to the pore-forming alpha subunit. Interacts with SCN1A; regulatory subunit of SCN1A/Nav1.1. Interacts with SCN2A; regulatory subunit of SCN2A/Nav1.2. Interacts with SCN3A; regulatory subunit of SCN3A/Nav1.3. Interacts with SCN5A; regulatory subunit of SCN5A/Nav1.5. Interacts with SCN8A; regulatory subunit of SCN8A/Nav1.6. Interacts with SCN9A; regulatory subunit of SCN9A/Nav1.7. Interacts with SCN10A; regulatory subunit of SCN10A/Nav1.8. Interacts with TNR; may play a crucial role in clustering and regulation of activity of SCN2B-containing Nav channels at nodes of Ranvier.

The protein resides in the cell membrane. The protein localises to the cell projection. It is found in the axon. Regulatory subunit of multiple voltage-gated sodium (Nav) channels directly mediating the depolarization of excitable membranes. Navs, also called VGSCs (voltage-gated sodium channels) or VDSCs (voltage-dependent sodium channels), operate by switching between closed and open conformations depending on the voltage difference across the membrane. In the open conformation they allow Na(+) ions to selectively pass through the pore, along their electrochemical gradient. The influx of Na+ ions provokes membrane depolarization, initiating the propagation of electrical signals throughout cells and tissues. The accessory beta subunits participate in localization and functional modulation of the Nav channels. Modulates the activity of SCN1A/Nav1.1, SCN2A/Nav1.2, SCN2A/Nav1.3, SCN5A/Nav1.5, SCN8A/Nav1.6, SCN9A/Nav1.7 and SCN10A/Nav1.8. This Mus musculus (Mouse) protein is Sodium channel regulatory subunit beta-2.